We begin with the raw amino-acid sequence, 512 residues long: Matrix metalloproteinase-27 (512 aa).

The first 17 residues, 1–17 (MKSFLLLFLLFVTFSSA), serve as a signal peptide directing secretion. The propeptide at 18–98 (LPADQKMENE…PRCGVPDVGQ (81 aa)) is activation peptide. The short motif at 89-96 (PRCGVPDV) is the Cysteine switch element. C91 provides a ligand contact to Zn(2+). N-linked (GlcNAc...) asparagine glycosylation is present at N110. 2 residues coordinate Ca(2+): D121 and D155. Residue H165 participates in Zn(2+) binding. Residues D173, G174, and V178 each contribute to the Ca(2+) site. H181 contacts Zn(2+). Positions 188 and 192 each coordinate Ca(2+). Zn(2+) is bound at residue H194. D196 and E199 together coordinate Ca(2+). A Zn(2+)-binding site is contributed by H216. E217 is a catalytic residue. 2 residues coordinate Zn(2+): H220 and H226. Hemopexin repeat units lie at residues 276 to 325 (PHAC…WPSL), 326 to 371 (PADL…GFPR), 373 to 421 (VKKI…FPGI), and 422 to 465 (GLRV…WFQC). Cysteines 279 and 465 form a disulfide. Ca(2+) is bound at residue D286. The Ca(2+) site is built by D377 and D426. The required for retention in the endoplasmic reticulum stretch occupies residues 466–512 (KEPLNSSLDFHFNQEKAYSGEVETLHHQSLSLLIFGIVHLLNKICSY).

It belongs to the peptidase M10A family. Requires Ca(2+) as cofactor. The cofactor is Zn(2+). N-glycosylated.

It localises to the endoplasmic reticulum. Functionally, matrix metalloproteinases degrade protein components of the extracellular matrix such as fibronectin, laminin, gelatins and/or collagens. The sequence is that of Matrix metalloproteinase-27 (MMP27) from Tupaia belangeri (Common tree shrew).